Here is a 113-residue protein sequence, read N- to C-terminus: Large ribosomal subunit protein bL19 (113 aa).

It belongs to the bacterial ribosomal protein bL19 family.

Its function is as follows. This protein is located at the 30S-50S ribosomal subunit interface and may play a role in the structure and function of the aminoacyl-tRNA binding site. The chain is Large ribosomal subunit protein bL19 from Mycolicibacterium vanbaalenii (strain DSM 7251 / JCM 13017 / BCRC 16820 / KCTC 9966 / NRRL B-24157 / PYR-1) (Mycobacterium vanbaalenii).